The following is a 176-amino-acid chain: MKTVQDYIRTIVDFPHEGIMFRDVTTLFADPRGFRIAIDQMLHPYAGLQIDKVVGLEARGFILGGAIAHQLSKGFVPIRKKGKLPGKTISEAYTLEYGEAIVEIHDDAIQPGEKVLVVDDLLATGGTAEAGIKLIERLGGEIISTSFIIDLPDLGGRARLEAMGVEVNALCAYEGL.

It belongs to the purine/pyrimidine phosphoribosyltransferase family. In terms of assembly, homodimer.

The protein resides in the cytoplasm. The catalysed reaction is AMP + diphosphate = 5-phospho-alpha-D-ribose 1-diphosphate + adenine. It participates in purine metabolism; AMP biosynthesis via salvage pathway; AMP from adenine: step 1/1. Functionally, catalyzes a salvage reaction resulting in the formation of AMP, that is energically less costly than de novo synthesis. This is Adenine phosphoribosyltransferase from Roseobacter denitrificans (strain ATCC 33942 / OCh 114) (Erythrobacter sp. (strain OCh 114)).